We begin with the raw amino-acid sequence, 98 residues long: NADH-ubiquinone oxidoreductase chain 4L (98 aa).

The next 3 helical transmembrane spans lie at 1-21, 29-49, and 61-81; these read MSLT…GLLL, SLLC…MIIL, and IILL…LVMV.

The protein belongs to the complex I subunit 4L family. In terms of assembly, core subunit of respiratory chain NADH dehydrogenase (Complex I) which is composed of 45 different subunits.

It localises to the mitochondrion inner membrane. It carries out the reaction a ubiquinone + NADH + 5 H(+)(in) = a ubiquinol + NAD(+) + 4 H(+)(out). In terms of biological role, core subunit of the mitochondrial membrane respiratory chain NADH dehydrogenase (Complex I) which catalyzes electron transfer from NADH through the respiratory chain, using ubiquinone as an electron acceptor. Part of the enzyme membrane arm which is embedded in the lipid bilayer and involved in proton translocation. The protein is NADH-ubiquinone oxidoreductase chain 4L (MT-ND4L) of Platyrrhinus brachycephalus (Short-headed broad-nosed bat).